Here is a 126-residue protein sequence, read N- to C-terminus: Protein ApaG (126 aa).

Positions 2–126 (SALDTSIRVE…FRLATPGLLH (125 aa)) constitute an ApaG domain.

This is Protein ApaG from Shewanella sp. (strain W3-18-1).